A 172-amino-acid polypeptide reads, in one-letter code: MRRQPAKVAALLLGLLLECTEAKKHCWYFEGLYPTYYICRSYEDCCGSRCCVRALSIQRLWYFWFLLMMGVLFCCGAGFFIRRRMYPPPLIEEPAFNVSYTRQPPNPGPGAQQPGPPYYTDPGGPGMNPVGNSMAMAFQVPPNSPQGSVACPPPPAYCNTPPPPYEQVVKAK.

The N-terminal stretch at 1 to 22 (MRRQPAKVAALLLGLLLECTEA) is a signal peptide. The Extracellular portion of the chain corresponds to 23-60 (KKHCWYFEGLYPTYYICRSYEDCCGSRCCVRALSIQRL). The helical transmembrane segment at 61-81 (WYFWFLLMMGVLFCCGAGFFI) threads the bilayer. Topologically, residues 82–172 (RRRMYPPPLI…PPYEQVVKAK (91 aa)) are cytoplasmic. The tract at residues 102 to 153 (RQPPNPGPGAQQPGPPYYTDPGGPGMNPVGNSMAMAFQVPPNSPQGSVACPP) is disordered. Residues 104–119 (PPNPGPGAQQPGPPYY) show a composition bias toward pro residues.

This sequence belongs to the VOPP1/ECOP family. As to quaternary structure, interacts with WWOX (via WW domain). In terms of tissue distribution, widely expressed with highest levels in thymus and ovary.

The protein localises to the cytoplasmic vesicle membrane. It is found in the late endosome membrane. It localises to the lysosome membrane. Its function is as follows. Increases the transcriptional activity of NFKB1 by facilitating its nuclear translocation, DNA-binding and associated apoptotic response, when overexpressed. May sequester WWOX in lysosomal vesicles and thereby regulate WWOX role as tumor suppressor. The protein is WW domain binding protein VOPP1 of Homo sapiens (Human).